A 475-amino-acid polypeptide reads, in one-letter code: ADP-ribose glycohydrolase MACROD2 (475 aa).

Positions 59 to 240 (QEAPQMKKSL…IYKKKMNEFF (182 aa)) constitute a Macro domain. Substrate contacts are provided by residues 77-79 (GDI), 90-92 (AAN), and 97-102 (GGGGVD). Lys-170 is covalently cross-linked (Glycyl lysine isopeptide (Lys-Gly) (interchain with G-Cter in ubiquitin)). Residues 185–191 (ISTGIYG) and Phe-224 contribute to the substrate site. Disordered stretches follow at residues 241 to 306 (PVDD…SQEA) and 324 to 475 (GVNT…EDLQ). Composition is skewed to basic and acidic residues over residues 251–261 (ADMKEDSEGPE) and 335–359 (SEDK…DSDM). A compositionally biased stretch (polar residues) spans 360 to 375 (TNHSVCDQELPNGQEN). Positions 376–386 (DSAKSEGKTEA) are enriched in basic and acidic residues. 2 stretches are compositionally biased toward polar residues: residues 387 to 402 (ESPS…SPNQ) and 440 to 469 (SQGS…PTES).

Belongs to the MacroD-type family. MacroD1/2-like subfamily. In terms of assembly, interacts with ADP-ribosylated PARP1. As to expression, expressed in the kidney.

The protein resides in the nucleus. It carries out the reaction 2''-O-acetyl-ADP-D-ribose + H2O = ADP-D-ribose + acetate + H(+). It catalyses the reaction 4-O-(ADP-D-ribosyl)-L-aspartyl-[protein] + H2O = L-aspartyl-[protein] + ADP-D-ribose + H(+). The catalysed reaction is 5-O-(ADP-D-ribosyl)-L-glutamyl-[protein] + H2O = L-glutamyl-[protein] + ADP-D-ribose + H(+). The enzyme catalyses alpha-NAD(+) + H2O = ADP-D-ribose + nicotinamide + H(+). With respect to regulation, subject to product inhibition by ADP-ribose. Functionally, removes ADP-ribose from aspartate and glutamate residues in proteins bearing a single ADP-ribose moiety. Inactive towards proteins bearing poly-ADP-ribose. Deacetylates O-acetyl-ADP ribose, a signaling molecule generated by the deacetylation of acetylated lysine residues in histones and other proteins. The polypeptide is ADP-ribose glycohydrolase MACROD2 (Mus musculus (Mouse)).